A 120-amino-acid chain; its full sequence is Large ribosomal subunit protein uL18 (120 aa).

Belongs to the universal ribosomal protein uL18 family. Part of the 50S ribosomal subunit; part of the 5S rRNA/L5/L18/L25 subcomplex. Contacts the 5S and 23S rRNAs.

Functionally, this is one of the proteins that bind and probably mediate the attachment of the 5S RNA into the large ribosomal subunit, where it forms part of the central protuberance. The chain is Large ribosomal subunit protein uL18 from Methylobacterium sp. (strain 4-46).